An 880-amino-acid chain; its full sequence is EP-cadherin (880 aa).

Positions 1 to 28 are cleaved as a signal peptide; that stretch reads MGSTRLRNASVWLCGLLCLLQVVPSINA. The propeptide occupies 29–155; sequence DVSGCKPGFS…THTGLKRKKR (127 aa). N-linked (GlcNAc...) asparagine glycosylation is present at Asn-61. 5 consecutive Cadherin domains span residues 156–263, 264–376, 377–487, 488–593, and 594–704; these read DWVI…RPKF, TQDV…APIF, DPKT…APFF, VPAV…DNGP, and VPSP…GFDL. The Extracellular segment spans residues 156-703; the sequence is DWVIPPIKVS…CQEKLVGGFD (548 aa). Thr-343, Thr-382, and Thr-400 each carry an O-linked (GalNAc...) threonine glycan. Asn-425 carries N-linked (GlcNAc...) asparagine glycosylation. Thr-428, Thr-469, Thr-471, Thr-473, and Thr-475 each carry an O-linked (GalNAc...) threonine glycan. N-linked (GlcNAc...) asparagine glycosylation occurs at Asn-558. Thr-562, Thr-576, Thr-578, and Thr-580 each carry an O-linked (GalNAc...) threonine glycan. 2 disulfides stabilise this stretch: Cys-603–Cys-687 and Cys-685–Cys-694. A glycan (N-linked (GlcNAc...) asparagine) is linked at Asn-681. The chain crosses the membrane as a helical span at residues 704 to 728; that stretch reads LPIILVILGSVLALLILFLLLLLFL. Residues 729–880 lie on the Cytoplasmic side of the membrane; sequence KRKKVVKEPL…DMYGGDDDEE (152 aa). The tract at residues 790–826 is disordered; sequence PAPHYRPRPSNPDEIGNFIDENLDAADNDPTAPPYDS.

As to quaternary structure, interacts with CTNNB1.

It is found in the cell membrane. Cadherins are calcium-dependent cell adhesion proteins. They preferentially interact with themselves in a homophilic manner in connecting cells; cadherins may thus contribute to the sorting of heterogeneous cell types. The sequence is that of EP-cadherin from Xenopus laevis (African clawed frog).